The primary structure comprises 226 residues: ATP synthase F(0) complex subunit a (226 aa).

6 helical membrane-spanning segments follow: residues 12–32 (PTVL…LLIP), 68–88 (WSLM…LGLL), 97–117 (QLSM…AMGL), 138–158 (IPML…ALAV), 182–202 (LAIN…LTIL), and 203–223 (ETAI…LYLH).

Belongs to the ATPase A chain family. Component of the ATP synthase complex composed at least of ATP5F1A/subunit alpha, ATP5F1B/subunit beta, ATP5MC1/subunit c (homooctomer), MT-ATP6/subunit a, MT-ATP8/subunit 8, ATP5ME/subunit e, ATP5MF/subunit f, ATP5MG/subunit g, ATP5MK/subunit k, ATP5MJ/subunit j, ATP5F1C/subunit gamma, ATP5F1D/subunit delta, ATP5F1E/subunit epsilon, ATP5PF/subunit F6, ATP5PB/subunit b, ATP5PD/subunit d, ATP5PO/subunit OSCP. ATP synthase complex consists of a soluble F(1) head domain (subunits alpha(3) and beta(3)) - the catalytic core - and a membrane F(0) domain - the membrane proton channel (subunits c, a, 8, e, f, g, k and j). These two domains are linked by a central stalk (subunits gamma, delta, and epsilon) rotating inside the F1 region and a stationary peripheral stalk (subunits F6, b, d, and OSCP). Interacts with DNAJC30; interaction is direct.

The protein resides in the mitochondrion inner membrane. It carries out the reaction H(+)(in) = H(+)(out). Functionally, subunit a, of the mitochondrial membrane ATP synthase complex (F(1)F(0) ATP synthase or Complex V) that produces ATP from ADP in the presence of a proton gradient across the membrane which is generated by electron transport complexes of the respiratory chain. ATP synthase complex consist of a soluble F(1) head domain - the catalytic core - and a membrane F(1) domain - the membrane proton channel. These two domains are linked by a central stalk rotating inside the F(1) region and a stationary peripheral stalk. During catalysis, ATP synthesis in the catalytic domain of F(1) is coupled via a rotary mechanism of the central stalk subunits to proton translocation. With the subunit c (ATP5MC1), forms the proton-conducting channel in the F(0) domain, that contains two crucial half-channels (inlet and outlet) that facilitate proton movement from the mitochondrial intermembrane space (IMS) into the matrix. Protons are taken up via the inlet half-channel and released through the outlet half-channel, following a Grotthuss mechanism. This is ATP synthase F(0) complex subunit a from Pongo abelii (Sumatran orangutan).